We begin with the raw amino-acid sequence, 205 residues long: Protein N-terminal glutamine amidohydrolase (205 aa).

Active-site residues include C20, H74, and D90.

The protein belongs to the NTAQ1 family. As to quaternary structure, monomer.

The catalysed reaction is N-terminal L-glutaminyl-[protein] + H2O = N-terminal L-glutamyl-[protein] + NH4(+). Its function is as follows. Mediates the side-chain deamidation of N-terminal glutamine residues to glutamate, an important step in N-end rule pathway of protein degradation. Conversion of the resulting N-terminal glutamine to glutamate renders the protein susceptible to arginylation, polyubiquitination and degradation as specified by the N-end rule. Does not act on substrates with internal or C-terminal glutamine and does not act on non-glutamine residues in any position. This Drosophila pseudoobscura pseudoobscura (Fruit fly) protein is Protein N-terminal glutamine amidohydrolase (tun).